We begin with the raw amino-acid sequence, 1877 residues long: Proprotein convertase subtilisin/kexin type 5 (1877 aa).

Positions 1–34 are cleaved as a signal peptide; that stretch reads MDWDWGNRCSRPGRRDLLCVLALLAGCLLPVCRT. Residues 35-116 constitute a propeptide that is removed on maturation; that stretch reads RVYTNHWAVK…QQVVKKRTKR (82 aa). Topologically, residues 117-1768 are extracellular; that stretch reads DYDLSHAQST…EAEFYEHTKT (1652 aa). The Peptidase S8 domain maps to 136–455; that stretch reads MWYMHCSDNT…FGLMDAEAMV (320 aa). Active-site charge relay system residues include Asp-173 and His-214. 2 N-linked (GlcNAc...) asparagine glycosylation sites follow: Asn-227 and Asn-383. Residue Ser-388 is the Charge relay system of the active site. The P/Homo B domain occupies 463–603; sequence TVPQQHVCVE…SLVLYGTSVQ (141 aa). Positions 521–523 match the Cell attachment site motif; sequence RGD. FU repeat units lie at residues 632 to 682, 685 to 732, 736 to 779, 781 to 826, 834 to 881, 884 to 929, 931 to 981, 984 to 1030, 1034 to 1079, 1081 to 1123, 1127 to 1168, 1206 to 1248, 1252 to 1299, 1301 to 1345, 1347 to 1390, 1392 to 1438, 1442 to 1487, 1491 to 1536, 1540 to 1585, 1589 to 1636, 1640 to 1685, and 1691 to 1738; these read EDYA…GHYH, KKRC…GSYE, KNVC…GQFF, GHDC…SYYL, YKSC…GEYI, QGHC…WKFE, KKQC…GHYP, GHAC…GEFQ, YEEC…KTFG, KWEC…GFHG, LGEC…STWP, TSQN…GTWP, SGSC…GFYA, DGVC…KHVA, EGVC…SFYP, MRQC…GTYK, NDEC…VEYW, SHRC…GYHT, SQQC…GYYG, SGRC…HYYA, AQTC…GEYR, and NFNC…SHSR. The tract at residues 638-1753 is CRM (Cys-rich motif); it reads CDPECSEVGC…CDCQSSTDEC (1116 aa). N-linked (GlcNAc...) asparagine glycosylation is present at Asn-667. Residues Asn-754, Asn-804, and Asn-854 are each glycosylated (N-linked (GlcNAc...) asparagine). N-linked (GlcNAc...) asparagine glycosylation is found at Asn-951 and Asn-1016. An N-linked (GlcNAc...) asparagine glycan is attached at Asn-1220. Asn-1317 carries an N-linked (GlcNAc...) asparagine glycan. An N-linked (GlcNAc...) asparagine glycan is attached at Asn-1523. Asn-1711 and Asn-1733 each carry an N-linked (GlcNAc...) asparagine glycan. The chain crosses the membrane as a helical span at residues 1769–1789; it reads ALLVTSGAMLLLLLGAAAVVW. The Cytoplasmic segment spans residues 1790–1877; the sequence is RKSRSRPVAK…EYDDESYSYQ (88 aa). 2 AC regions span residues 1825-1844 and 1856-1877; these read VIEY…IVYM and YGLL…YSYQ.

Belongs to the peptidase S8 family. PC5A is expressed in most tissues but is most abundant in the intestine and adrenals. PC5B is expressed in the intestine, adrenals and lung but not in the brain.

It is found in the secreted. The protein localises to the endomembrane system. Its function is as follows. Serine endoprotease that processes various proproteins by cleavage at paired basic amino acids, recognizing the RXXX[KR]R consensus motif. Likely functions in the constitutive and regulated secretory pathways. Plays an essential role in pregnancy establishment by proteolytic activation of a number of important factors such as BMP2, CALD1 and alpha-integrins. May be responsible for the maturation of gastrointestinal peptides. May be involved in the cellular proliferation of adrenal cortex via the activation of growth factors. This is Proprotein convertase subtilisin/kexin type 5 (Pcsk5) from Mus musculus (Mouse).